A 142-amino-acid chain; its full sequence is Hemoglobin subunit alpha-A (142 aa).

One can recognise a Globin domain in the interval 2 to 142 (VLTAGDKANV…VATALTSKYR (141 aa)). Heme b contacts are provided by histidine 59 and histidine 88.

Belongs to the globin family. As to quaternary structure, heterotetramer of two alpha-A chains and two beta chains. In terms of tissue distribution, red blood cells.

Functionally, involved in oxygen transport from the lung to the various peripheral tissues. This chain is Hemoglobin subunit alpha-A, found in Chelonoidis niger (Galapagos giant tortoise).